Consider the following 528-residue polypeptide: U6 snRNA (guanine-N(2))-methyltransferase THUMPD2 (528 aa).

The span at glutamine 154 to leucine 168 shows a compositional bias: basic and acidic residues. 2 disordered regions span residues glutamine 154 to glutamine 200 and methionine 437 to serine 460. The THUMP domain maps to glutamate 162 to leucine 266.

It belongs to the methyltransferase superfamily. As to quaternary structure, part of the heterodimeric THUMPD2-TRM112 methyltransferase complex; this complex forms an active tRNA methyltransferase, where TRMT112 acts as an activator of the catalytic subunit THUMPD2.

Its subcellular location is the nucleus. The catalysed reaction is guanosine in U6 snRNA + S-adenosyl-L-methionine = N(2)-methylguanosine in U6 snRNA + S-adenosyl-L-homocysteine + H(+). Catalytic subunit of the THUMPD2-TRM112 methyltransferase complex, that specifically mediates the S-adenosyl-L-methionine-dependent N(2)-methylation of guanosine nucleotides, most probably at position 72 (m2G72), in the U6snRNA of the major spliceosome. This modification in the U6 snRNA affects the constitutive splicing efficiency of introns that have suboptimal splice sites and can impact final mRNA levels. The sequence is that of U6 snRNA (guanine-N(2))-methyltransferase THUMPD2 from Mus musculus (Mouse).